The primary structure comprises 248 residues: Pyridoxine 5'-phosphate synthase (248 aa).

Asn12 serves as a coordination point for 3-amino-2-oxopropyl phosphate. Residue 14-15 (DH) coordinates 1-deoxy-D-xylulose 5-phosphate. Arg23 serves as a coordination point for 3-amino-2-oxopropyl phosphate. Residue His48 is the Proton acceptor of the active site. Residues Arg50 and His55 each coordinate 1-deoxy-D-xylulose 5-phosphate. Catalysis depends on Glu75, which acts as the Proton acceptor. A 1-deoxy-D-xylulose 5-phosphate-binding site is contributed by Thr105. His199 serves as the catalytic Proton donor. 3-amino-2-oxopropyl phosphate-binding positions include Gly200 and 221–222 (GH).

Belongs to the PNP synthase family. As to quaternary structure, homooctamer; tetramer of dimers.

Its subcellular location is the cytoplasm. It carries out the reaction 3-amino-2-oxopropyl phosphate + 1-deoxy-D-xylulose 5-phosphate = pyridoxine 5'-phosphate + phosphate + 2 H2O + H(+). It functions in the pathway cofactor biosynthesis; pyridoxine 5'-phosphate biosynthesis; pyridoxine 5'-phosphate from D-erythrose 4-phosphate: step 5/5. Catalyzes the complicated ring closure reaction between the two acyclic compounds 1-deoxy-D-xylulose-5-phosphate (DXP) and 3-amino-2-oxopropyl phosphate (1-amino-acetone-3-phosphate or AAP) to form pyridoxine 5'-phosphate (PNP) and inorganic phosphate. This chain is Pyridoxine 5'-phosphate synthase, found in Jannaschia sp. (strain CCS1).